The primary structure comprises 502 residues: Lysine--tRNA ligase (502 aa).

Residues glutamate 403 and glutamate 410 each coordinate Mg(2+).

This sequence belongs to the class-II aminoacyl-tRNA synthetase family. Homodimer. The cofactor is Mg(2+).

Its subcellular location is the cytoplasm. It carries out the reaction tRNA(Lys) + L-lysine + ATP = L-lysyl-tRNA(Lys) + AMP + diphosphate. The polypeptide is Lysine--tRNA ligase (Parasynechococcus marenigrum (strain WH8102)).